The sequence spans 282 residues: Ribonuclease 3 (282 aa).

One can recognise an RNase III domain in the interval 18-141 (FVAFFKSLNI…LVAAIYEDLG (124 aa)). Glu-59 contributes to the Mg(2+) binding site. Asp-63 is an active-site residue. 2 residues coordinate Mg(2+): Asp-127 and Glu-130. The active site involves Glu-130.

The protein belongs to the ribonuclease III family. As to quaternary structure, homodimer. Mg(2+) serves as cofactor.

The protein resides in the cytoplasm. The enzyme catalyses Endonucleolytic cleavage to 5'-phosphomonoester.. Digests double-stranded RNA. Involved in the processing of primary rRNA transcript to yield the immediate precursors to the large and small rRNAs (23S and 16S). Processes some mRNAs, and tRNAs when they are encoded in the rRNA operon. Processes pre-crRNA and tracrRNA of type II CRISPR loci if present in the organism. The sequence is that of Ribonuclease 3 from Mycoplasmoides pneumoniae (strain ATCC 15531 / DSM 23978 / CIP 103766 / NBRC 14401 / NCTC 10119 / FH) (Mycoplasma pneumoniae).